The following is a 149-amino-acid chain: Putative pre-16S rRNA nuclease (149 aa).

It belongs to the YqgF nuclease family.

The protein resides in the cytoplasm. In terms of biological role, could be a nuclease involved in processing of the 5'-end of pre-16S rRNA. This is Putative pre-16S rRNA nuclease from Cupriavidus metallidurans (strain ATCC 43123 / DSM 2839 / NBRC 102507 / CH34) (Ralstonia metallidurans).